Consider the following 241-residue polypeptide: Centromere protein H (241 aa).

Methionine 1 is subject to N-acetylmethionine. The interval 1-24 (MEEQPRERSEAGAEACEEKRGLSQ) is disordered. Positions 28-186 (ERIEDRISLL…KEDVDKMENS (159 aa)) form a coiled coil. Lysine 61 is covalently cross-linked (Glycyl lysine isopeptide (Lys-Gly) (interchain with G-Cter in SUMO2)). The residue at position 62 (threonine 62) is a Phosphothreonine.

This sequence belongs to the CENP-H/MCM16 family. As to quaternary structure, self-associates. Component of the CENPA-NAC complex, at least composed of CENPA, CENPC, CENPH, CENPM, CENPN, CENPT and CENPU. The CENPA-NAC complex interacts with the CENPA-CAD complex, composed of CENPI, CENPK, CENPL, CENPO, CENPP, CENPQ, CENPR and CENPS. Interacts directly with CENPK. Interacts with KIF2C and NDC80. Interacts with TRIM36. In terms of tissue distribution, abundantly expressed in thymus, spleen, uterus, ovary, testis and muscle, and weakly expressed in small intestine, lung and stomach. Barely detectable expression in kidney, liver, skin and prostate gland. Not detected in brain, heart or adrenal gland. Also expressed weakly in various hematopoietic cell lines.

Its subcellular location is the nucleus. The protein resides in the chromosome. The protein localises to the centromere. It is found in the kinetochore. Functionally, component of the CENPA-NAC (nucleosome-associated) complex, a complex that plays a central role in assembly of kinetochore proteins, mitotic progression and chromosome segregation. The CENPA-NAC complex recruits the CENPA-CAD (nucleosome distal) complex and may be involved in incorporation of newly synthesized CENPA into centromeres. Required for chromosome congression and efficiently align the chromosomes on a metaphase plate. The polypeptide is Centromere protein H (Mus musculus (Mouse)).